A 207-amino-acid polypeptide reads, in one-letter code: Outer-membrane lipoprotein LolB (207 aa).

The signal sequence occupies residues 1–21; the sequence is MTLPDFRLIRLLPLASLVLTA. The N-palmitoyl cysteine moiety is linked to residue Cys-22. Cys-22 carries the S-diacylglycerol cysteine lipid modification.

It belongs to the LolB family. Monomer.

It localises to the cell outer membrane. In terms of biological role, plays a critical role in the incorporation of lipoproteins in the outer membrane after they are released by the LolA protein. This Salmonella schwarzengrund (strain CVM19633) protein is Outer-membrane lipoprotein LolB.